The following is a 158-amino-acid chain: Glycine/sarcosine/betaine reductase complex component A1 (158 aa).

The active site involves Sec44. A non-standard amino acid (selenocysteine) is located at residue Sec44.

The protein belongs to the GrdA family. In terms of assembly, monomer. Component of the glycine, sarcosine and betaine reductase complexes, together with components B and C.

The enzyme catalyses acetyl phosphate + [thioredoxin]-disulfide + NH4(+) + H2O = [thioredoxin]-dithiol + glycine + phosphate + H(+). The catalysed reaction is acetyl phosphate + methylamine + [thioredoxin]-disulfide + H2O = sarcosine + [thioredoxin]-dithiol + phosphate + H(+). It carries out the reaction acetyl phosphate + trimethylamine + [thioredoxin]-disulfide + H2O = glycine betaine + [thioredoxin]-dithiol + phosphate + H(+). In the first step of glycine, betaine and sarcosine reductases, the substrate is bound to component PB via a Schiff base intermediate. Then the PB-activated substrate is nucleophilically attacked by the selenol anion of component PA to transform it to a carboxymethylated selenoether and the respective amine. By action of component PC, acetyl phosphate is formed, leaving component PA in its oxidized state. Finally component PA becomes reduced by the thioredoxin system to start a new catalytic cycle of reductive deamination. This chain is Glycine/sarcosine/betaine reductase complex component A1 (grdA1), found in Peptoclostridium acidaminophilum (Eubacterium acidaminophilum).